A 120-amino-acid polypeptide reads, in one-letter code: ESAT-6-like protein EsxQ (120 aa).

This sequence belongs to the WXG100 family. ESAT-6 subfamily.

It is found in the secreted. This is ESAT-6-like protein EsxQ from Mycobacterium bovis (strain ATCC BAA-935 / AF2122/97).